The following is a 366-amino-acid chain: Quinolinate synthase (366 aa).

Iminosuccinate contacts are provided by histidine 44 and serine 61. Cysteine 108 contacts [4Fe-4S] cluster. Residues 139 to 141 (YIN) and serine 160 each bind iminosuccinate. Cysteine 228 is a binding site for [4Fe-4S] cluster. Residues 254–256 (HPE) and threonine 271 each bind iminosuccinate. Cysteine 318 is a binding site for [4Fe-4S] cluster.

Belongs to the quinolinate synthase family. Type 3 subfamily. Requires [4Fe-4S] cluster as cofactor.

Its subcellular location is the cytoplasm. It carries out the reaction iminosuccinate + dihydroxyacetone phosphate = quinolinate + phosphate + 2 H2O + H(+). The protein operates within cofactor biosynthesis; NAD(+) biosynthesis; quinolinate from iminoaspartate: step 1/1. Functionally, catalyzes the condensation of iminoaspartate with dihydroxyacetone phosphate to form quinolinate. The protein is Quinolinate synthase of Listeria monocytogenes serovar 1/2a (strain ATCC BAA-679 / EGD-e).